The primary structure comprises 476 residues: Aspartyl/glutamyl-tRNA(Asn/Gln) amidotransferase subunit B (476 aa).

This sequence belongs to the GatB/GatE family. GatB subfamily. As to quaternary structure, heterotrimer of A, B and C subunits.

It catalyses the reaction L-glutamyl-tRNA(Gln) + L-glutamine + ATP + H2O = L-glutaminyl-tRNA(Gln) + L-glutamate + ADP + phosphate + H(+). The enzyme catalyses L-aspartyl-tRNA(Asn) + L-glutamine + ATP + H2O = L-asparaginyl-tRNA(Asn) + L-glutamate + ADP + phosphate + 2 H(+). Allows the formation of correctly charged Asn-tRNA(Asn) or Gln-tRNA(Gln) through the transamidation of misacylated Asp-tRNA(Asn) or Glu-tRNA(Gln) in organisms which lack either or both of asparaginyl-tRNA or glutaminyl-tRNA synthetases. The reaction takes place in the presence of glutamine and ATP through an activated phospho-Asp-tRNA(Asn) or phospho-Glu-tRNA(Gln). This chain is Aspartyl/glutamyl-tRNA(Asn/Gln) amidotransferase subunit B, found in Vesicomyosocius okutanii subsp. Calyptogena okutanii (strain HA).